Consider the following 158-residue polypeptide: Protein ORF4 (158 aa).

Functionally, acts by interacting with multiple viral and host proteins to enhance the activity of viral RNA-dependent RNA polymerase. The polypeptide is Protein ORF4 (Hepatitis E virus genotype 1 (isolate Human/Pakistan/Sar-55) (HEV-1)).